The chain runs to 283 residues: Bifunctional protein FolD (283 aa).

NADP(+)-binding positions include 166–168 (GAS), Ser191, and Ile232.

The protein belongs to the tetrahydrofolate dehydrogenase/cyclohydrolase family. As to quaternary structure, homodimer.

It catalyses the reaction (6R)-5,10-methylene-5,6,7,8-tetrahydrofolate + NADP(+) = (6R)-5,10-methenyltetrahydrofolate + NADPH. The enzyme catalyses (6R)-5,10-methenyltetrahydrofolate + H2O = (6R)-10-formyltetrahydrofolate + H(+). The protein operates within one-carbon metabolism; tetrahydrofolate interconversion. Functionally, catalyzes the oxidation of 5,10-methylenetetrahydrofolate to 5,10-methenyltetrahydrofolate and then the hydrolysis of 5,10-methenyltetrahydrofolate to 10-formyltetrahydrofolate. The sequence is that of Bifunctional protein FolD from Chromobacterium violaceum (strain ATCC 12472 / DSM 30191 / JCM 1249 / CCUG 213 / NBRC 12614 / NCIMB 9131 / NCTC 9757 / MK).